The chain runs to 76 residues: Monocarboxylate transporter 1 (76 aa).

3 helical membrane passes run 1 to 18 (LSILAFVDMVARPSMGLA), 28 to 48 (IQYFFAASVVANGVCHLLAPL), and 53 to 73 (IGFCVYAGVFGFAFGWLSSVL). Aspartate 8 contacts H(+). (S)-lactate is bound at residue arginine 12.

Belongs to the major facilitator superfamily. Monocarboxylate porter (TC 2.A.1.13) family. In terms of assembly, interacts with BSG; interaction mediates SLC16A1 targeting to the plasma membrane. Interacts with EMB; interaction mediates SLC16A1 targeting to the plasma membrane.

The protein resides in the cell membrane. The protein localises to the basolateral cell membrane. It is found in the apical cell membrane. The catalysed reaction is (S)-lactate(in) + H(+)(in) = (S)-lactate(out) + H(+)(out). The enzyme catalyses acetate(out) + H(+)(out) = acetate(in) + H(+)(in). It catalyses the reaction acetoacetate(out) + H(+)(out) = acetoacetate(in) + H(+)(in). It carries out the reaction pyruvate(out) + H(+)(out) = pyruvate(in) + H(+)(in). The catalysed reaction is (R)-3-hydroxybutanoate(out) + H(+)(out) = (R)-3-hydroxybutanoate(in) + H(+)(in). The enzyme catalyses 3-methyl-2-oxobutanoate(out) + H(+)(out) = 3-methyl-2-oxobutanoate(in) + H(+)(in). It catalyses the reaction 4-methyl-2-oxopentanoate(out) + H(+)(out) = 4-methyl-2-oxopentanoate(in) + H(+)(in). It carries out the reaction succinate(in) + 2 H(+)(in) = succinate(out) + 2 H(+)(out). In terms of biological role, bidirectional proton-coupled monocarboxylate transporter. Catalyzes the rapid transport across the plasma membrane of many monocarboxylates such as lactate, pyruvate, acetate and the ketone bodies acetoacetate and beta-hydroxybutyrate, and thus contributes to the maintenance of intracellular pH. The transport direction is determined by the proton motive force and the concentration gradient of the substrate monocarboxylate. MCT1 is a major lactate exporter. Plays a role in cellular responses to a high-fat diet by modulating the cellular levels of lactate and pyruvate that contribute to the regulation of central metabolic pathways and insulin secretion, with concomitant effects on plasma insulin levels and blood glucose homeostasis. Facilitates the protonated monocarboxylate form of succinate export, that its transient protonation upon muscle cell acidification in exercising muscle and ischemic heart. Functions via alternate outward- and inward-open conformation states. Protonation and deprotonation is essential for the conformational transition. The chain is Monocarboxylate transporter 1 (SLC16A1) from Meriones unguiculatus (Mongolian jird).